The primary structure comprises 307 residues: Probable GTP 3',8-cyclase (307 aa).

A Radical SAM core domain is found at 5-227 (AYGRRISSLR…RRTKYYLGGA (223 aa)). GTP is bound at residue arginine 14. 2 residues coordinate [4Fe-4S] cluster: cysteine 21 and cysteine 25. Tyrosine 27 lines the S-adenosyl-L-methionine pocket. Position 28 (cysteine 28) interacts with [4Fe-4S] cluster. Lysine 61 serves as a coordination point for GTP. S-adenosyl-L-methionine is bound at residue glycine 65. Threonine 89 serves as a coordination point for GTP. Serine 113 contacts S-adenosyl-L-methionine. Lysine 151 is a binding site for GTP. Positions 241 and 244 each coordinate [4Fe-4S] cluster. 246–248 (RLR) contributes to the GTP binding site. Position 258 (cysteine 258) interacts with [4Fe-4S] cluster.

It belongs to the radical SAM superfamily. MoaA family. [4Fe-4S] cluster serves as cofactor.

The enzyme catalyses GTP + AH2 + S-adenosyl-L-methionine = (8S)-3',8-cyclo-7,8-dihydroguanosine 5'-triphosphate + 5'-deoxyadenosine + L-methionine + A + H(+). It participates in cofactor biosynthesis; molybdopterin biosynthesis. In terms of biological role, catalyzes the cyclization of GTP to (8S)-3',8-cyclo-7,8-dihydroguanosine 5'-triphosphate. The protein is Probable GTP 3',8-cyclase of Methanocella arvoryzae (strain DSM 22066 / NBRC 105507 / MRE50).